The chain runs to 142 residues: MAAMTVHLDIVSAENSIFKGRVACLQVTGVEGELGILPGHAPLLTTIKPGMARIIKQDGSEEVIYLSGGFLEVQPNSIAVLADVVMRADEIDEQAALEAKRRAEAHMADAGADFDYDAAMVELAKAMAQLRVVETIKKNIAR.

The protein belongs to the ATPase epsilon chain family. In terms of assembly, F-type ATPases have 2 components, CF(1) - the catalytic core - and CF(0) - the membrane proton channel. CF(1) has five subunits: alpha(3), beta(3), gamma(1), delta(1), epsilon(1). CF(0) has three main subunits: a, b and c.

The protein resides in the cell inner membrane. Functionally, produces ATP from ADP in the presence of a proton gradient across the membrane. This is ATP synthase epsilon chain from Shewanella putrefaciens (strain CN-32 / ATCC BAA-453).